Here is a 425-residue protein sequence, read N- to C-terminus: Serine--tRNA ligase (425 aa).

233–235 serves as a coordination point for L-serine; it reads TAE. 264–266 contacts ATP; it reads RRE. Glu-287 provides a ligand contact to L-serine. ATP is bound at residue 351-354; that stretch reads EISS. Residue Ser-385 participates in L-serine binding.

Belongs to the class-II aminoacyl-tRNA synthetase family. Type-1 seryl-tRNA synthetase subfamily. In terms of assembly, homodimer. The tRNA molecule binds across the dimer.

The protein resides in the cytoplasm. The catalysed reaction is tRNA(Ser) + L-serine + ATP = L-seryl-tRNA(Ser) + AMP + diphosphate + H(+). It catalyses the reaction tRNA(Sec) + L-serine + ATP = L-seryl-tRNA(Sec) + AMP + diphosphate + H(+). It functions in the pathway aminoacyl-tRNA biosynthesis; selenocysteinyl-tRNA(Sec) biosynthesis; L-seryl-tRNA(Sec) from L-serine and tRNA(Sec): step 1/1. Its function is as follows. Catalyzes the attachment of serine to tRNA(Ser). Is also able to aminoacylate tRNA(Sec) with serine, to form the misacylated tRNA L-seryl-tRNA(Sec), which will be further converted into selenocysteinyl-tRNA(Sec). This chain is Serine--tRNA ligase, found in Synechococcus sp. (strain CC9605).